The sequence spans 100 residues: Defensin-6 (100 aa).

Positions 1–19 (MRTLTILTAVLLVALQAKA) are cleaved as a signal peptide. The propeptide occupies 20–68 (EPLQAEDEPLQAKAYEADAQEQRGANDQDFAVSFAEDASSSLRALGSTR). 3 cysteine pairs are disulfide-bonded: C72-C99, C74-C88, and C78-C98.

Belongs to the alpha-defensin family. Homodimer. Self-assembles into higher-order oligomers termed nanonets, fibril-like structures that entrap microbes. Self-assembly into nanonets seems to protect against proteolytic digestion in duodenal fluid. Interacts with Y.enterocolitica invasin and S.typhimurium fliC/flagellim; the interaction creates an anchoring site for progressive DEFA6 self-assembly into nanonets. In terms of processing, proteolytically cleaved by trypsin at Arg-68; the propeptide is stored in the tissue of the small intestine and the mature peptide is found in the luminal fluid; cleavage may occur during or after release into the lumen. The N-terminal propeptide region suppresses self-assembly and renders DEFA6 propeptide unable to agglutinate bacteria and protect human epithelial cells from bacterial invasion. Post-translationally, under reducing conditions, naturally present in the gut owing to the low redox potential or enzymatically generated by the thioredoxin system, the disulfide bridges are opened leading to a conformational change of DEF6, thereby changing its antimicrobial spectrum. The reduced form exhibits inhibitory activity against anaerobic bacteria, in contrast to the minimal antimicrobial activity of the disulfide-linked oxidized form. The formation of higher-order nanonets and bacterial entrapment is independent of the redox state.

The protein resides in the secreted. Its subcellular location is the cytoplasmic vesicle. It is found in the secretory vesicle. In terms of biological role, host-defense peptide that contributes to intestinal innate immunity and mediates homeostasis at mucosal surfaces by forming higher-order oligomers that capture bacteria and prevent microbial invasion of the epithelium. After binding to bacterial surface proteins, undergoes ordered self-assembly to form fibril-like nanonets that surround and entangle bacteria and thereby prevent bacterial invasion across the epithelial barrier. Entangles and agglutinates Gram-negative bacteria, such as E.coli, S.typhimurium and Y.enterocolitica, and Gram-positive bacteria such as L.monocytogenes, thereby protecting the intestine against invasion by enteric bacterial pathogens. Blocks adhesion of C.albicans to intestinal epithelial cells and thereby suppresses fungal invasion of epithelial cells and biofilm formation. Under reducing conditions and in an acidic environment similar to the intestinal milieu, exhibits inhibitory activity against anaerobic bacteria such as B.adolescentis, L.acidophilus, and B.breve, as well as B.longum and S.thermophilus, possibly by leading to alterations in bacterial cell envelope structures. The disulfide-linked oxidized form exhibits negligible antimicrobial activity against Gram-negative and Gram-positive bacteria, as compared to the enteric defensin DEFA5. The protein is Defensin-6 (DEFA6) of Pan troglodytes (Chimpanzee).